We begin with the raw amino-acid sequence, 464 residues long: Fumarate hydratase class II (464 aa).

Substrate is bound by residues 97 to 99 (SGT), 128 to 131 (HPND), 138 to 140 (SSN), and threonine 186. Residue histidine 187 is the Proton donor/acceptor of the active site. Serine 317 is an active-site residue. Substrate contacts are provided by residues serine 318 and 323-325 (KVN).

It belongs to the class-II fumarase/aspartase family. Fumarase subfamily. In terms of assembly, homotetramer.

Its subcellular location is the cytoplasm. It carries out the reaction (S)-malate = fumarate + H2O. It functions in the pathway carbohydrate metabolism; tricarboxylic acid cycle; (S)-malate from fumarate: step 1/1. Involved in the TCA cycle. Catalyzes the stereospecific interconversion of fumarate to L-malate. This Leptospira interrogans serogroup Icterohaemorrhagiae serovar copenhageni (strain Fiocruz L1-130) protein is Fumarate hydratase class II.